The chain runs to 433 residues: D-amino acid dehydrogenase (433 aa).

3–17 (IVVLGAGVLGVTSAW) contacts FAD.

The protein belongs to the DadA oxidoreductase family. The cofactor is FAD.

The catalysed reaction is a D-alpha-amino acid + A + H2O = a 2-oxocarboxylate + AH2 + NH4(+). It participates in amino-acid degradation; D-alanine degradation; NH(3) and pyruvate from D-alanine: step 1/1. Oxidative deamination of D-amino acids. The chain is D-amino acid dehydrogenase from Paracoccus denitrificans (strain Pd 1222).